The primary structure comprises 241 residues: Uridylate kinase (241 aa).

Position 15-18 (15-18 (KLSG)) interacts with ATP. An involved in allosteric activation by GTP region spans residues 23-28 (GTEGFG). Gly57 contacts UMP. ATP contacts are provided by Gly58 and Arg62. Residues Asp77 and 138-145 (TGNPFFTT) contribute to the UMP site. Residues Thr165, Phe171, and Asp174 each coordinate ATP.

It belongs to the UMP kinase family. Homohexamer.

Its subcellular location is the cytoplasm. The catalysed reaction is UMP + ATP = UDP + ADP. It participates in pyrimidine metabolism; CTP biosynthesis via de novo pathway; UDP from UMP (UMPK route): step 1/1. Allosterically activated by GTP. Inhibited by UTP. Functionally, catalyzes the reversible phosphorylation of UMP to UDP. The polypeptide is Uridylate kinase (Shigella dysenteriae serotype 1 (strain Sd197)).